Reading from the N-terminus, the 242-residue chain is Dehydration-responsive element-binding protein 1J (242 aa).

Over residues 20 to 29 (SSATTAATAT) the composition is skewed to low complexity. The segment at 20–44 (SSATTAATATGPASPKRPAGRTKFQ) is disordered. The segment at residues 50–109 (VFRGVRRRGRAGRWVCEVRVPGSRGDRLWVGTFDTAEEAARAHDAAMLALCGASASLNFA) is a DNA-binding region (AP2/ERF). The disordered stretch occupies residues 143 to 184 (FQRRGSTAATATATSGDAASTAPPSSSPVLSPNDDNASSAST). Positions 148–184 (STAATATATSGDAASTAPPSSSPVLSPNDDNASSAST) are enriched in low complexity.

It belongs to the AP2/ERF transcription factor family. ERF subfamily.

The protein resides in the nucleus. Transcriptional activator that binds specifically to the DNA sequence 5'-[AG]CCGAC-3'. Binding to the C-repeat/DRE element mediates high salinity- and dehydration-inducible transcription. In Oryza sativa subsp. japonica (Rice), this protein is Dehydration-responsive element-binding protein 1J (DREB1J).